A 266-amino-acid chain; its full sequence is GTP cyclohydrolase III (266 aa).

Belongs to the archaeal-type GTP cyclohydrolase family.

The catalysed reaction is GTP + 3 H2O = 2-amino-5-formylamino-6-(5-phospho-D-ribosylamino)pyrimidin-4(3H)-one + 2 phosphate + 2 H(+). Functionally, catalyzes the formation of 2-amino-5-formylamino-6-ribofuranosylamino-4(3H)-pyrimidinone ribonucleotide monophosphate and inorganic phosphate from GTP. Also has an independent pyrophosphate phosphohydrolase activity. The protein is GTP cyclohydrolase III of Methanococcus maripaludis (strain C7 / ATCC BAA-1331).